Here is a 409-residue protein sequence, read N- to C-terminus: Divalent metal cation transporter MntH (409 aa).

The next 11 helical transmembrane spans lie at 19 to 39 (LSLM…GNFA), 46 to 66 (ATFG…AMLV), 98 to 118 (WVQA…GAAI), 122 to 142 (LLFG…TFLI), 155 to 175 (LVIG…LIFS), 196 to 216 (AVFL…IYLH), 241 to 261 (IAMT…AAAF), 290 to 310 (VFGL…TLAG), 320 to 340 (FYIP…IVIL), 348 to 368 (ILVM…VPLL), and 388 to 408 (ILGK…LISL).

Belongs to the NRAMP family.

Its subcellular location is the cell inner membrane. H(+)-stimulated, divalent metal cation uptake system. In Yersinia pseudotuberculosis serotype O:1b (strain IP 31758), this protein is Divalent metal cation transporter MntH.